Reading from the N-terminus, the 140-residue chain is Nucleoside diphosphate kinase (140 aa).

ATP is bound by residues Lys-11, Phe-59, Arg-87, Thr-93, Arg-104, and Asn-114. Residue His-117 is the Pros-phosphohistidine intermediate of the active site.

Belongs to the NDK family. As to quaternary structure, homotetramer. It depends on Mg(2+) as a cofactor.

The protein resides in the cytoplasm. The enzyme catalyses a 2'-deoxyribonucleoside 5'-diphosphate + ATP = a 2'-deoxyribonucleoside 5'-triphosphate + ADP. The catalysed reaction is a ribonucleoside 5'-diphosphate + ATP = a ribonucleoside 5'-triphosphate + ADP. Functionally, major role in the synthesis of nucleoside triphosphates other than ATP. The ATP gamma phosphate is transferred to the NDP beta phosphate via a ping-pong mechanism, using a phosphorylated active-site intermediate. The chain is Nucleoside diphosphate kinase from Nitrobacter hamburgensis (strain DSM 10229 / NCIMB 13809 / X14).